The sequence spans 264 residues: 3-methyl-2-oxobutanoate hydroxymethyltransferase (264 aa).

Positions 46 and 85 each coordinate Mg(2+). 3-methyl-2-oxobutanoate contacts are provided by residues 46–47 (DS), Asp85, and Lys113. Position 115 (Glu115) interacts with Mg(2+). Glu181 functions as the Proton acceptor in the catalytic mechanism.

This sequence belongs to the PanB family. In terms of assembly, homodecamer; pentamer of dimers. It depends on Mg(2+) as a cofactor.

Its subcellular location is the cytoplasm. The catalysed reaction is 3-methyl-2-oxobutanoate + (6R)-5,10-methylene-5,6,7,8-tetrahydrofolate + H2O = 2-dehydropantoate + (6S)-5,6,7,8-tetrahydrofolate. The protein operates within cofactor biosynthesis; (R)-pantothenate biosynthesis; (R)-pantoate from 3-methyl-2-oxobutanoate: step 1/2. In terms of biological role, catalyzes the reversible reaction in which hydroxymethyl group from 5,10-methylenetetrahydrofolate is transferred onto alpha-ketoisovalerate to form ketopantoate. The polypeptide is 3-methyl-2-oxobutanoate hydroxymethyltransferase (Salmonella typhi).